Reading from the N-terminus, the 433-residue chain is MTSSQELFDHARELMPGGVNSPVRAFGSVGGTPRFITSAQGAYLTDADGRDYVDLVCSWGPALLGHAHPEVIAAVHAAVDRGLSFGASTPAETELAELVLGRVSAVERLRMVSTGTEATMTAVRLARGFTGRNLIVKFAGCYHGHVDSLLAAAGSGLATLAMPGSAGVTEATAAETLVLPYNDLEAVREVFAVHGGQIAAVITEAAPANMGVVEPAPGFNAGLAQITREHGALLILDEVLTGFRVGPSGYWGLTGASEGWTPDLLTFGKVVGGGLPTAALGGRADVMEYLAPFGPVYQAGTLSGNPVAMAAGVATLKAATADVYDQVDARSLELSAALSRALEAEGVQHSVQRAGNLFSVAFGVSEVRNYADAKAQETFRYAPFFHSMLDSGVYLPPSVFEAWFLSAAHDDTAMNRIFDALPSAAKAAAAATV.

At K269 the chain carries N6-(pyridoxal phosphate)lysine.

Belongs to the class-III pyridoxal-phosphate-dependent aminotransferase family. HemL subfamily. Homodimer. Requires pyridoxal 5'-phosphate as cofactor.

The protein localises to the cytoplasm. It carries out the reaction (S)-4-amino-5-oxopentanoate = 5-aminolevulinate. The protein operates within porphyrin-containing compound metabolism; protoporphyrin-IX biosynthesis; 5-aminolevulinate from L-glutamyl-tRNA(Glu): step 2/2. The chain is Glutamate-1-semialdehyde 2,1-aminomutase from Renibacterium salmoninarum (strain ATCC 33209 / DSM 20767 / JCM 11484 / NBRC 15589 / NCIMB 2235).